The sequence spans 424 residues: MNLLIQNGRVIDPSQGLDEELDLLVENGLVREMGRGLTAPAGVEIVDAAGCCVVPGLVDMHVHLREPGLEYKEDIESGSRAAVAGGFTSIACMPNTKPVIDNKALARYVIARGREAGLCNVFPVGCLTAGSKGERLAEMGELKEAGCVAVSDDGRPVVNAELMRRALEYARGMQIPVISHAEDLSLVGEGVMNEGFTSTELGLKGIPRVAEDIAIARDVMLAEYTNSPIHIAHVSTSGAVRIIRNAKLRGVRVTCETAPHYFTLTDDAVRGYNTNAKMNPPLREADDVAAIRAGLSDGTIDVIATDHAPHHLDEKDVEFNVAANGIIGLETSLPLSLALVEQGVLTMSQLVERMSCCPSLILGLERGTLAKGAVADITLIDPTLPWVVEADKLASKSTNTPWMGQEMKGAAVATIVAGRVVYRR.

Zn(2+) contacts are provided by histidine 61 and histidine 63. Substrate-binding positions include 63–65 (HLR) and asparagine 95. Zn(2+)-binding residues include aspartate 153, histidine 180, and histidine 233. Asparagine 279 serves as a coordination point for substrate. Residue aspartate 306 coordinates Zn(2+). Residue aspartate 306 is part of the active site. Histidine 310 is a substrate binding site.

It belongs to the metallo-dependent hydrolases superfamily. DHOase family. Class I DHOase subfamily. The cofactor is Zn(2+).

The enzyme catalyses (S)-dihydroorotate + H2O = N-carbamoyl-L-aspartate + H(+). It functions in the pathway pyrimidine metabolism; UMP biosynthesis via de novo pathway; (S)-dihydroorotate from bicarbonate: step 3/3. In terms of biological role, catalyzes the reversible cyclization of carbamoyl aspartate to dihydroorotate. This chain is Dihydroorotase, found in Pelobacter propionicus (strain DSM 2379 / NBRC 103807 / OttBd1).